The sequence spans 647 residues: 1-phosphatidylinositol 4,5-bisphosphate phosphodiesterase zeta-1 (647 aa).

In terms of domain architecture, EF-hand spans 43–78 (CHFAHVKHIFKENDRQNQGRITIEEFRAIYRCIVHR). A PI-PLC X-box domain is found at 163-307 (QDMNHPLSDY…LKFKILVKNR (145 aa)). Residues His178 and His223 contribute to the active site. Positions 386–502 (LSDLVIYTKA…GYILKPDILR (117 aa)) constitute a PI-PLC Y-box domain. The 126-residue stretch at 502 to 627 (RDTTLGFNPN…KGYRRVPLFS (126 aa)) folds into the C2 domain.

Interacts via its C2 domain with PtdIns(3)P and, to a lesser extent, PtdIns(5)P in vitro. Requires Ca(2+) as cofactor. As to expression, highly expressed in postpuberal testis, where expression is sperm cell-specific. Also expressed in brain of both sexes.

Its subcellular location is the nucleus. It localises to the cytoplasm. It is found in the perinuclear region. The catalysed reaction is a 1,2-diacyl-sn-glycero-3-phospho-(1D-myo-inositol-4,5-bisphosphate) + H2O = 1D-myo-inositol 1,4,5-trisphosphate + a 1,2-diacyl-sn-glycerol + H(+). In terms of biological role, the production of the second messenger molecules diacylglycerol (DAG) and inositol 1,4,5-trisphosphate (IP3) is mediated by activated phosphatidylinositol-specific phospholipase C enzymes. In vitro, hydrolyzes PtdIns(4,5)P2 in a Ca(2+)-dependent manner. Triggers intracellular Ca(2+) oscillations in oocytes solely during M phase and is involved in inducing oocyte activation and initiating embryonic development up to the blastocyst stage. Is therefore a strong candidate for the egg-activating soluble sperm factor that is transferred from the sperm into the egg cytoplasm following gamete membrane fusion. May exert an inhibitory effect on phospholipase-C-coupled processes that depend on calcium ions and protein kinase C, including CFTR trafficking and function. The chain is 1-phosphatidylinositol 4,5-bisphosphate phosphodiesterase zeta-1 from Mus musculus (Mouse).